The primary structure comprises 312 residues: Methionyl-tRNA formyltransferase (312 aa).

110–113 is a (6S)-5,6,7,8-tetrahydrofolate binding site; that stretch reads SLLP.

The protein belongs to the Fmt family.

It carries out the reaction L-methionyl-tRNA(fMet) + (6R)-10-formyltetrahydrofolate = N-formyl-L-methionyl-tRNA(fMet) + (6S)-5,6,7,8-tetrahydrofolate + H(+). Attaches a formyl group to the free amino group of methionyl-tRNA(fMet). The formyl group appears to play a dual role in the initiator identity of N-formylmethionyl-tRNA by promoting its recognition by IF2 and preventing the misappropriation of this tRNA by the elongation apparatus. In Mycobacterium marinum (strain ATCC BAA-535 / M), this protein is Methionyl-tRNA formyltransferase.